The following is a 382-amino-acid chain: Probable G-protein coupled receptor 132 (382 aa).

The Extracellular segment spans residues 1–42 (MRSEPTNAAGNTTLGVTSVLQSTSVPSSETCHVSYEESRVVL). The N-linked (GlcNAc...) asparagine glycan is linked to Asn-11. Residues 43-65 (VVVYSAVCLLGLPANCLTAWLTL) traverse the membrane as a helical segment. Residues 66–76 (LQVLQRNVLAV) are Cytoplasmic-facing. The helical transmembrane segment at 77 to 99 (YLFCLSLCELLYISTVPLWIIYI) threads the bilayer. At 100–113 (QNQHKWNLGPQACK) the chain is on the extracellular side. Cys-112 and Cys-184 are oxidised to a cystine. Residues 114–135 (VTAYIFFCNIYISILLLCCISC) form a helical membrane-spanning segment. Over 136–155 (DRYMAVVYALESRGHRHQRT) the chain is Cytoplasmic. A helical membrane pass occupies residues 156–175 (AVTISACVILLVGLVNYPVF). The Extracellular segment spans residues 176–198 (DMKVEKSFCFEPLRMNSKIAGYH). A helical membrane pass occupies residues 199–221 (YLRFTFGFAIPLGILAFTNHQIF). Residues 222-241 (RSIKLSDSLSAAQKNKVKRS) are Cytoplasmic-facing. A helical transmembrane segment spans residues 242–261 (AIAVVTIFLVCFAPYHVVLL). The Extracellular segment spans residues 262 to 286 (VKAASFSFYQGDMDAVCAFESRLYT). A helical transmembrane segment spans residues 287–309 (VSMVFLCLSTVNSVADPIIYVLG). The Cytoplasmic segment spans residues 310–382 (TDHSRQEVSR…SPERLPEELC (73 aa)).

It belongs to the G-protein coupled receptor 1 family. As to expression, highly expressed in hematopoietic tissues rich in lymphocytes like spleen and thymus. Weakly expressed in heart and lung. Highly expressed in infiltrating macrophages within atherosclerotic lesions.

Its subcellular location is the cell membrane. Its function is as follows. May be a receptor for oxidized free fatty acids derived from linoleic and arachidonic acids such as 9-hydroxyoctadecadienoic acid (9-HODE). Activates a G alpha protein, most likely G alpha(q). May be involved in apoptosis. Functions at the G2/M checkpoint to delay mitosis. May function as a sensor that monitors the oxidative states and mediates appropriate cellular responses such as secretion of paracrine signals and attenuation of proliferation. May mediate ths accumulation of intracellular inositol phosphates at acidic pH through proton-sensing activity. The polypeptide is Probable G-protein coupled receptor 132 (Gpr132) (Mus musculus (Mouse)).